Reading from the N-terminus, the 184-residue chain is MQGTSKDNGGRHPLYRGVRQRKNSNKWVSEIREPRKPNRIWLGTFSTPEMAAIAYDVAALALKGSQAELNFPNSVSSLPAPTSMSPADIQAAAASAAAAFGAARDAIVMANNNSQTSGVACMNSSYDNTNMNGFMDEDLVFDMPNVLMNMAEGMLLSPPRPTVFDAAYDADGFPGGDDYLWNFP.

Residues 1-21 (MQGTSKDNGGRHPLYRGVRQR) form a disordered region. The segment at residues 14-72 (LYRGVRQRKNSNKWVSEIREPRKPNRIWLGTFSTPEMAAIAYDVAALALKGSQAELNFP) is a DNA-binding region (AP2/ERF).

The protein belongs to the AP2/ERF transcription factor family. ERF subfamily.

It localises to the nucleus. In terms of biological role, probably acts as a transcriptional activator. Binds to the GCC-box pathogenesis-related promoter element. May be involved in the regulation of gene expression by stress factors and by components of stress signal transduction pathways. The polypeptide is Ethylene-responsive transcription factor ERF024 (ERF024) (Arabidopsis thaliana (Mouse-ear cress)).